The sequence spans 326 residues: Malate dehydrogenase (326 aa).

12–18 serves as a coordination point for NAD(+); sequence GGTGQIA. 2 residues coordinate substrate: Arg-93 and Arg-99. Residues Asn-106, Gln-113, and 130-132 contribute to the NAD(+) site; that span reads VGN. The substrate site is built by Asn-132 and Arg-163. The active-site Proton acceptor is the His-188.

It belongs to the LDH/MDH superfamily. MDH type 2 family.

It carries out the reaction (S)-malate + NAD(+) = oxaloacetate + NADH + H(+). Functionally, catalyzes the reversible oxidation of malate to oxaloacetate. In Chlamydia trachomatis serovar L2 (strain ATCC VR-902B / DSM 19102 / 434/Bu), this protein is Malate dehydrogenase.